The chain runs to 828 residues: MKLSRRSFMKANAVAAVAAAAGLSVPGVARAVVGQQEAIKWDKAPCRFCGTGCGVLVGTQQGRVVACQGDPDAPVNRGLNCIKGYFLPKIMYGKDRLTQPLLRMKNGKYDKEGEFTLITWDQAFDVMEEKFKTALKEKGPESIGMFGSGQWTIWEGYAASKLFKAGFRSNNIDPNARHCMASAVVGFMRTFGMDEPMGCYDDIEQADAFVLWGANMAEMHPILWSRITNRRLSNQNVTVAVLSTYQHRSFELADNGIIFTPQSDLVILNYIANYIIQNNAINQDFFSKHVNLRKGATDIGYGLRPTHPLEKAAKNPGSDASEPMSFEDYKAFVAEYTLEKTAEMTGVPKDQLEQLAQLYADPNKKVISYWTMGFNQHTRGVWANNLVYNLHLLTGKISQPGCGPFSLTGQPSACGTAREVGTFAHRLPADMVVTNEKHRDICEKKWNIPSGTIPAKIGLHAVAQDRALKDGKLNVYWTMCTNNMQAGPNINEERMPGWRDPRNFIIVSDPYPTVSALAADLILPTAMWVEKEGAYGNAERRTQFWRQQVQAPGEAKSDLWQLVQFSRRFKTEEVWPEDLLAKKPELRGKTLYEVLYATPEVSKFPVSELAEDQLNDESRELGFYLQKGLFEEYAWFGRGHGHDLAPFDDYHKARGLRWPVVNGKETQWRYSEGNDPYVKAGEGYKFYGKPDGKAVIFALPFEPAAEAPDEEYDLWLSTGRVLEHWHTGSMTRRVPELHRAFPEAVLFIHPLDAKARDLRRGDKVKVVSRRGEVISIVETRGRNRPPQGLVYMPFFDAAQLVNKLTQDATDPLSKETDFKKCAVKLEKV.

Positions methionine 1–alanine 31 form a signal peptide, tat-type signal. Residues isoleucine 39–aspartate 95 form the 4Fe-4S Mo/W bis-MGD-type domain. [4Fe-4S] cluster contacts are provided by cysteine 46, cysteine 49, cysteine 53, and cysteine 81. Mo-bis(molybdopterin guanine dinucleotide) contacts are provided by residues lysine 83, glutamine 150, asparagine 175, cysteine 179, tryptophan 212–methionine 219, serine 243–histidine 247, glutamine 262–aspartate 264, methionine 372, glutamine 376, asparagine 482, serine 508–aspartate 509, lysine 531, aspartate 558, and threonine 718–threonine 727. Phenylalanine 794 is a substrate binding site. Asparagine 802 and lysine 819 together coordinate Mo-bis(molybdopterin guanine dinucleotide).

It belongs to the prokaryotic molybdopterin-containing oxidoreductase family. NasA/NapA/NarB subfamily. As to quaternary structure, component of the periplasmic nitrate reductase NapAB complex composed of NapA and NapB. It depends on [4Fe-4S] cluster as a cofactor. Mo-bis(molybdopterin guanine dinucleotide) serves as cofactor. In terms of processing, predicted to be exported by the Tat system. The position of the signal peptide cleavage has not been experimentally proven.

It localises to the periplasm. It catalyses the reaction 2 Fe(II)-[cytochrome] + nitrate + 2 H(+) = 2 Fe(III)-[cytochrome] + nitrite + H2O. In terms of biological role, catalytic subunit of the periplasmic nitrate reductase complex NapAB. Receives electrons from NapB and catalyzes the reduction of nitrate to nitrite. This chain is Periplasmic nitrate reductase, found in Shigella boydii serotype 4 (strain Sb227).